A 348-amino-acid polypeptide reads, in one-letter code: Sesquiterpene synthase MGU_11447 (348 aa).

The Mg(2+) site is built by D91 and D96. Positions 91-96 match the DDXXXD motif motif; that stretch reads DDLFVD. R184 provides a ligand contact to substrate. Residues N230, S234, and E238 each contribute to the Mg(2+) site.

It belongs to the terpene synthase family. Mg(2+) is required as a cofactor.

It catalyses the reaction (2E,6E)-farnesyl diphosphate + H2O = (+)-corvol ether B + diphosphate. The catalysed reaction is (2E,6E)-farnesyl diphosphate + H2O = (+)-corvol ether A + diphosphate. Terpene synthase that catalyzes the conversion of (2E,6E)-farnesyl diphosphate (FPP) into sesquiterpenes which are important for fungi-environment interactions. Produces a mixture consisting of 8 sesquiterpenes including corvol ethers A and B, as well as traces of epizonarene, gamma-cadinene, delta-cadinene, alpha-cadinene, alpha-cadinol, and an unidentified sesquiterpene. Produces both corvol ether A and corvol ether B in similar concentrations. This chain is Sesquiterpene synthase MGU_11447, found in Metarhizium guizhouense (strain ARSEF 977).